We begin with the raw amino-acid sequence, 157 residues long: Transcription elongation factor GreA (157 aa).

The interval 1-60 is disordered; the sequence is MEKVPMTSAGFAALGEELKKRQSEDRPRIIEHIAEARSHGDLSENAEYHAAKEEQSHNEG. Positions 16–60 are enriched in basic and acidic residues; sequence EELKKRQSEDRPRIIEHIAEARSHGDLSENAEYHAAKEEQSHNEG. The stretch at 46–73 forms a coiled coil; sequence AEYHAAKEEQSHNEGRIAELEDKLARAD.

The protein belongs to the GreA/GreB family.

Functionally, necessary for efficient RNA polymerase transcription elongation past template-encoded arresting sites. The arresting sites in DNA have the property of trapping a certain fraction of elongating RNA polymerases that pass through, resulting in locked ternary complexes. Cleavage of the nascent transcript by cleavage factors such as GreA or GreB allows the resumption of elongation from the new 3'terminus. GreA releases sequences of 2 to 3 nucleotides. In Bradyrhizobium diazoefficiens (strain JCM 10833 / BCRC 13528 / IAM 13628 / NBRC 14792 / USDA 110), this protein is Transcription elongation factor GreA.